A 121-amino-acid chain; its full sequence is Small ribosomal subunit protein uS13 (121 aa).

A disordered region spans residues 94–121; it reads GLPVRGQKTRNNAHTVKGKPKAIAGKKK. Positions 109 to 121 are enriched in basic residues; that stretch reads VKGKPKAIAGKKK.

This sequence belongs to the universal ribosomal protein uS13 family. In terms of assembly, part of the 30S ribosomal subunit. Forms a loose heterodimer with protein S19. Forms two bridges to the 50S subunit in the 70S ribosome.

Located at the top of the head of the 30S subunit, it contacts several helices of the 16S rRNA. In the 70S ribosome it contacts the 23S rRNA (bridge B1a) and protein L5 of the 50S subunit (bridge B1b), connecting the 2 subunits; these bridges are implicated in subunit movement. Contacts the tRNAs in the A and P-sites. The polypeptide is Small ribosomal subunit protein uS13 (Onion yellows phytoplasma (strain OY-M)).